The primary structure comprises 496 residues: Galactokinase (496 aa).

Alanine 2 carries the N-acetylalanine modification. 4 residues coordinate alpha-D-galactose: arginine 56, glutamate 62, histidine 63, and aspartate 65. Residues glycine 161, glycine 163, serine 165, and serine 166 each coordinate ATP. An alpha-D-galactose-binding site is contributed by aspartate 210. Catalysis depends on aspartate 210, which acts as the Proton acceptor. The ATP site is built by serine 252, glutamine 253, and lysine 254. Tyrosine 262 serves as a coordination point for alpha-D-galactose.

It belongs to the GHMP kinase family. GalK subfamily. The cofactor is Mg(2+). Mn(2+) serves as cofactor. Ca(2+) is required as a cofactor. Expressed in roots, stems, leaves, flowers and young siliques. Higher expression in the elongating middle stem region than in the lower or upper stem region.

The catalysed reaction is alpha-D-galactose + ATP = alpha-D-galactose 1-phosphate + ADP + H(+). It participates in carbohydrate metabolism; galactose metabolism. In terms of biological role, sugar-1-kinase with a very high substrate specificity for the alpha-anomeric configuration of D-galacose (D-Gal). Also efficiently converts 2-deoxy-D-Gal to 2-deoxy-D-al-1-phosphate. The chain is Galactokinase (GAL1) from Arabidopsis thaliana (Mouse-ear cress).